Consider the following 268-residue polypeptide: uncharacterized protein (268 aa).

The segment at 45–64 (SDTQGPAPGINGQGKPSPGA) is disordered.

This is an uncharacterized protein from Aquifex aeolicus (strain VF5).